The chain runs to 271 residues: N-acetyltransferase ECO1 (271 aa).

A CCHH-type zinc finger spans residues 26–50 (VKCPKCSITYSTNSPSDLVQHKRYH). In terms of domain architecture, N-acetyltransferase spans 109-271 (VMISPKKANE…SGKLLIPCYI (163 aa)).

This sequence belongs to the acetyltransferase family. ECO subfamily.

It is found in the nucleus. Probable acetyltransferase required for the establishment of sister chromatid cohesion and couple the processes of cohesion and DNA replication to ensure that only sister chromatids become paired together. In contrast to the structural cohesins, the deposition and establishment factors are required only during S phase. Acts by acetylating the cohesin complex component SMC3. The chain is N-acetyltransferase ECO1 (ECO1) from Kluyveromyces lactis (strain ATCC 8585 / CBS 2359 / DSM 70799 / NBRC 1267 / NRRL Y-1140 / WM37) (Yeast).